The following is a 226-amino-acid chain: DNA mismatch repair protein MutH (226 aa).

This sequence belongs to the MutH family.

It localises to the cytoplasm. Functionally, sequence-specific endonuclease that cleaves unmethylated GATC sequences. It is involved in DNA mismatch repair. In Actinobacillus pleuropneumoniae serotype 5b (strain L20), this protein is DNA mismatch repair protein MutH.